We begin with the raw amino-acid sequence, 206 residues long: Insecticyanin-B (206 aa).

The first 17 residues, 1–17 (MQRFLVFTIVAVATAAA), serve as a signal peptide directing secretion. 2 disulfides stabilise this stretch: Cys-26–Cys-136 and Cys-60–Cys-192.

It belongs to the calycin superfamily. Lipocalin family. Homotetramer. As to expression, synthesized only in the caterpillars, apparently by the epidermis and secreted into the hemolymph. The protein is passed over from the larval hemolymph to that of pupae and adults and is sequestered in the eggs.

The protein localises to the secreted. This protein binds a chromophore: biliverdin IX, isomer gamma. Mixed with lipoprotein-bound carotenes, this blue protein provides hornworms with their green cryptic coloration which serves a camouflage. The sequence is that of Insecticyanin-B (INSB) from Manduca sexta (Tobacco hawkmoth).